The chain runs to 216 residues: Phosphatidylserine decarboxylase proenzyme (216 aa).

The Schiff-base intermediate with substrate; via pyruvic acid role is filled by S183. Pyruvic acid (Ser); by autocatalysis is present on S183.

Belongs to the phosphatidylserine decarboxylase family. PSD-A subfamily. As to quaternary structure, heterodimer of a large membrane-associated beta subunit and a small pyruvoyl-containing alpha subunit. Pyruvate is required as a cofactor. In terms of processing, is synthesized initially as an inactive proenzyme. Formation of the active enzyme involves a self-maturation process in which the active site pyruvoyl group is generated from an internal serine residue via an autocatalytic post-translational modification. Two non-identical subunits are generated from the proenzyme in this reaction, and the pyruvate is formed at the N-terminus of the alpha chain, which is derived from the carboxyl end of the proenzyme. The post-translation cleavage follows an unusual pathway, termed non-hydrolytic serinolysis, in which the side chain hydroxyl group of the serine supplies its oxygen atom to form the C-terminus of the beta chain, while the remainder of the serine residue undergoes an oxidative deamination to produce ammonia and the pyruvoyl prosthetic group on the alpha chain.

The protein resides in the cell membrane. The enzyme catalyses a 1,2-diacyl-sn-glycero-3-phospho-L-serine + H(+) = a 1,2-diacyl-sn-glycero-3-phosphoethanolamine + CO2. It participates in phospholipid metabolism; phosphatidylethanolamine biosynthesis; phosphatidylethanolamine from CDP-diacylglycerol: step 2/2. Its function is as follows. Catalyzes the formation of phosphatidylethanolamine (PtdEtn) from phosphatidylserine (PtdSer). In Chlorobaculum tepidum (strain ATCC 49652 / DSM 12025 / NBRC 103806 / TLS) (Chlorobium tepidum), this protein is Phosphatidylserine decarboxylase proenzyme.